A 443-amino-acid chain; its full sequence is uncharacterized protein (443 aa).

The interval 1 to 21 (MQSVTPPPTQQGKPDPTNSDM) is disordered. The segment covering 10–20 (QQGKPDPTNSD) has biased composition (polar residues).

This is an uncharacterized protein from Caenorhabditis elegans.